A 72-amino-acid polypeptide reads, in one-letter code: ATP synthase subunit c (72 aa).

A run of 2 helical transmembrane segments spans residues 4–24 (ALGAGLAVSIAGIGGGIGMGI) and 46–66 (LLFITLAFIETLTIYGLLIAF).

This sequence belongs to the ATPase C chain family. In terms of assembly, F-type ATPases have 2 components, F(1) - the catalytic core - and F(0) - the membrane proton channel. F(1) has five subunits: alpha(3), beta(3), gamma(1), delta(1), epsilon(1). F(0) has three main subunits: a(1), b(2) and c(10-14). The alpha and beta chains form an alternating ring which encloses part of the gamma chain. F(1) is attached to F(0) by a central stalk formed by the gamma and epsilon chains, while a peripheral stalk is formed by the delta and b chains.

The protein resides in the cell membrane. In terms of biological role, f(1)F(0) ATP synthase produces ATP from ADP in the presence of a proton or sodium gradient. F-type ATPases consist of two structural domains, F(1) containing the extramembraneous catalytic core and F(0) containing the membrane proton channel, linked together by a central stalk and a peripheral stalk. During catalysis, ATP synthesis in the catalytic domain of F(1) is coupled via a rotary mechanism of the central stalk subunits to proton translocation. Its function is as follows. Key component of the F(0) channel; it plays a direct role in translocation across the membrane. A homomeric c-ring of between 10-14 subunits forms the central stalk rotor element with the F(1) delta and epsilon subunits. This Syntrophomonas wolfei subsp. wolfei (strain DSM 2245B / Goettingen) protein is ATP synthase subunit c.